The following is a 254-amino-acid chain: MTTAFTVVIPSRYASTRLPGKPLQLIGDKPMIQLVWEQACKSSAERVVVATDDPRIIEACQGFGAEAVLTREDHNSGTDRLAEVATKLGLAPDAIVVNVQGDEPLIPPSVIDQVAANLAAHGEARMATLAEPIEDIATLFNPNVVKVVSDINGLALTFSRSTLPWARDAFAKQPDVLPEGVPYRRHIGIYAYRAGFLHDFVSWGPCWLENTESLEQLRALWHGVRIHVGDALEAPPAGVDTPEDLERVRRLLGA.

This sequence belongs to the KdsB family.

Its subcellular location is the cytoplasm. It carries out the reaction 3-deoxy-alpha-D-manno-oct-2-ulosonate + CTP = CMP-3-deoxy-beta-D-manno-octulosonate + diphosphate. The protein operates within nucleotide-sugar biosynthesis; CMP-3-deoxy-D-manno-octulosonate biosynthesis; CMP-3-deoxy-D-manno-octulosonate from 3-deoxy-D-manno-octulosonate and CTP: step 1/1. It participates in bacterial outer membrane biogenesis; lipopolysaccharide biosynthesis. Its function is as follows. Activates KDO (a required 8-carbon sugar) for incorporation into bacterial lipopolysaccharide in Gram-negative bacteria. This Pseudomonas fluorescens (strain SBW25) protein is 3-deoxy-manno-octulosonate cytidylyltransferase.